The sequence spans 201 residues: Large ribosomal subunit protein uL4 (201 aa).

The segment at 46–71 (QKTRAEITGSGKKPWRQKGTGRARSG) is disordered.

It belongs to the universal ribosomal protein uL4 family. In terms of assembly, part of the 50S ribosomal subunit.

One of the primary rRNA binding proteins, this protein initially binds near the 5'-end of the 23S rRNA. It is important during the early stages of 50S assembly. It makes multiple contacts with different domains of the 23S rRNA in the assembled 50S subunit and ribosome. Functionally, forms part of the polypeptide exit tunnel. The protein is Large ribosomal subunit protein uL4 of Klebsiella pneumoniae (strain 342).